The following is a 166-amino-acid chain: Lipoprotein signal peptidase (166 aa).

4 consecutive transmembrane segments (helical) span residues 9–29 (ASGA…FDQL), 45–65 (ALTS…FGFL), 71–91 (WQRW…CFLL), and 100–120 (FSVS…DRLV). Active-site residues include aspartate 126 and aspartate 144. A helical transmembrane segment spans residues 135–155 (WHFPAFNLADSAITVGAVLLI).

Belongs to the peptidase A8 family.

It is found in the cell inner membrane. The catalysed reaction is Release of signal peptides from bacterial membrane prolipoproteins. Hydrolyzes -Xaa-Yaa-Zaa-|-(S,diacylglyceryl)Cys-, in which Xaa is hydrophobic (preferably Leu), and Yaa (Ala or Ser) and Zaa (Gly or Ala) have small, neutral side chains.. Its pathway is protein modification; lipoprotein biosynthesis (signal peptide cleavage). Its function is as follows. This protein specifically catalyzes the removal of signal peptides from prolipoproteins. This Burkholderia cenocepacia (strain HI2424) protein is Lipoprotein signal peptidase.